The sequence spans 333 residues: METSLYLPIVLIVGGIIFLILFFHYVPFFLWLSAKVSGVNISLIQLFLMRIRNVPPYIIVPGMIEAHKAGLKNITRDELEAHYLAGGHVEKVVHALVSASKANIELSFQMATAIDLAGRDVFEAVQMSVNPKVIDTPPVTAVAKDGIQLIAKARVTVRASIKQLVGGAGEDTILARVGEGIVSSIGSSENHKSVLENPDSISKLVLRKGLDAGTAFEILSIDIADIDIGKNIGAALQIDQANADKNIAQAKAEERRAMAVASEQEMKAKAQEARAKVIEAEAEVPKAMAEAFRSGNLGIMDYYRMKNIEADTSMRENIAKPTTGGTTNQPLSK.

Residues 9 to 29 traverse the membrane as a helical segment; that stretch reads IVLIVGGIIFLILFFHYVPFF.

The protein belongs to the flotillin-like FloA family. As to quaternary structure, homooligomerizes.

It is found in the cell membrane. The protein resides in the membrane raft. In terms of biological role, found in functional membrane microdomains (FMM) that may be equivalent to eukaryotic membrane rafts. FMMs are highly dynamic and increase in number as cells age. Flotillins are thought to be important factors in membrane fluidity. The chain is Flotillin-like protein FloA from Bacteroides thetaiotaomicron (strain ATCC 29148 / DSM 2079 / JCM 5827 / CCUG 10774 / NCTC 10582 / VPI-5482 / E50).